Consider the following 579-residue polypeptide: Folliculin (579 aa).

Residues 32–82 (GAGSGDGAGRGEPADEEEGGIQMSSRIRAHSPAEGASAESSSPGPKKSDMC) form a disordered region. A phosphoserine mark is found at serine 62 and serine 73. Low complexity predominate over residues 63 to 76 (PAEGASAESSSPGP). In terms of domain architecture, uDENN FLCN/SMCR8-type spans 86–242 (RSLAAGHPGY…RNGNAARSLT (157 aa)). The stretch at 285–309 (QMEQLAELEEESESWDNSEAEEEEK) forms a coiled coil. The span at 294–308 (EESESWDNSEAEEEE) shows a compositional bias: acidic residues. Positions 294–321 (EESESWDNSEAEEEEKGPALPEGAEGRE) are disordered. Phosphoserine occurs at positions 302, 406, 537, 542, and 571. A cDENN FLCN/SMCR8-type domain is found at 339–491 (QPRKLSVFKS…ILNKMEAALT (153 aa)). Residues 493 to 558 (QNLSVDVVDQ…LLKFWMTGLS (66 aa)) form the dDENN FLCN/SMCR8-type domain.

This sequence belongs to the folliculin family. Interacts (via C-terminus) with FNIP1 or FNIP2 (via C-terminus). Component of the lysosomal folliculin complex (LFC), composed of FLCN, FNIP1 (or FNIP2), RagA/RRAGA or RagB/RRAGB GDP-bound, RagC/RRAGC or RagD/RRAGD GTP-bound, and Ragulator. Interaction with FNIP1 or FNIP2 mediates indirect interaction with the PRKAA1, PRKAB1 and PRKAG1 subunits of 5'-AMP-activated protein kinase (AMPK). Interacts with HSP90AA1 in the presence of FNIP1. Interacts with HSP70, STUB1, CDC37, AHSA1, CCT2, STIP1, PTGES3 and PPP5C. Interacts with GABARAP; interaction takes place in the presence of FNIP1 and/or FNIP2. Interacts with RILP; the interaction is direct and promotes association between RILP and RAB34. Interacts with KIF3A and KIF3B. Interacts with lactate dehydrogenase LDHA, but not LDHB; the interaction is direct, may preferentially bind LDHA dimers rather than tetramers, and regulates LDHA activity, acting as an uncompetitive inhibitor. Phosphorylation by ULK1 modulates the interaction with GABARAP and is required to regulate autophagy.

The protein localises to the lysosome membrane. The protein resides in the cytoplasm. It is found in the cytosol. It localises to the cell projection. Its subcellular location is the cilium. The protein localises to the cytoskeleton. The protein resides in the microtubule organizing center. It is found in the centrosome. It localises to the spindle. Its subcellular location is the nucleus. Its activity is regulated as follows. GTPase-activating activity is inhibited in the folliculin complex (LFC), which stabilizes the GDP-bound state of RagA/RRAGA (or RagB/RRAGB), because Arg-164 is located far from the RagC/RRAGC or RagD/RRAGD nucleotide pocket. Disassembly of the LFC complex upon amino acid restimulation liberates the GTPase-activating activity. In terms of biological role, multi-functional protein, involved in both the cellular response to amino acid availability and in the regulation of glycolysis. GTPase-activating protein that plays a key role in the cellular response to amino acid availability through regulation of the non-canonical mTORC1 signaling cascade controlling the MiT/TFE factors TFEB and TFE3. Activates mTORC1 by acting as a GTPase-activating protein: specifically stimulates GTP hydrolysis by RagC/RRAGC or RagD/RRAGD, promoting the conversion to the GDP-bound state of RagC/RRAGC or RagD/RRAGD, and thereby activating the kinase activity of mTORC1. The GTPase-activating activity is inhibited during starvation and activated in presence of nutrients. Acts as a key component for non-canonical mTORC1-dependent control of the MiT/TFE factors TFEB and TFE3, while it is not involved in mTORC1-dependent phosphorylation of canonical RPS6KB1/S6K1 and EIF4EBP1/4E-BP1. In low-amino acid conditions, the lysosomal folliculin complex (LFC) is formed on the membrane of lysosomes, which inhibits the GTPase-activating activity of FLCN, inactivates mTORC1 and maximizes nuclear translocation of TFEB and TFE3. Upon amino acid restimulation, RagA/RRAGA (or RagB/RRAGB) nucleotide exchange promotes disassembly of the LFC complex and liberates the GTPase-activating activity of FLCN, leading to activation of mTORC1 and subsequent cytoplasmic retention of TFEB and TFE3. Indirectly acts as a positive regulator of Wnt signaling by promoting mTOR-dependent cytoplasmic retention of MiT/TFE factor TFE3. Required for the exit of hematopoietic stem cell from pluripotency by promoting mTOR-dependent cytoplasmic retention of TFE3, thereby increasing Wnt signaling. Involved in the control of embryonic stem cells differentiation; together with LAMTOR1 it is necessary to recruit and activate RagC/RRAGC and RagD/RRAGD at the lysosomes, and to induce exit of embryonic stem cells from pluripotency via non-canonical, mTOR-independent TFE3 inactivation. Acts as an inhibitor of browning of adipose tissue by regulating mTOR-dependent cytoplasmic retention of TFE3. In response to flow stress, regulates STK11/LKB1 accumulation and mTORC1 activation through primary cilia: may act by recruiting STK11/LKB1 to primary cilia for activation of AMPK resided at basal bodies, causing mTORC1 down-regulation. Together with FNIP1 and/or FNIP2, regulates autophagy: following phosphorylation by ULK1, interacts with GABARAP and promotes autophagy. Required for starvation-induced perinuclear clustering of lysosomes by promoting association of RILP with its effector RAB34. Regulates glycolysis by binding to lactate dehydrogenase LDHA, acting as an uncompetitive inhibitor. This chain is Folliculin, found in Bos taurus (Bovine).